The following is a 311-amino-acid chain: Thioredoxin reductase (311 aa).

Position 35–42 (35–42) interacts with FAD; the sequence is ERGIPGGQ. Cys134 and Cys137 are oxidised to a cystine. 277-286 serves as a coordination point for FAD; sequence DVRDKGLRQI.

It belongs to the class-II pyridine nucleotide-disulfide oxidoreductase family. As to quaternary structure, homodimer. It depends on FAD as a cofactor.

Its subcellular location is the cytoplasm. The catalysed reaction is [thioredoxin]-dithiol + NADP(+) = [thioredoxin]-disulfide + NADPH + H(+). This is Thioredoxin reductase (trxB) from Staphylococcus aureus (strain COL).